A 1004-amino-acid chain; its full sequence is UPF0182 protein Mflv_4654 (1004 aa).

A run of 7 helical transmembrane segments spans residues 18-38 (FLIA…RFID), 63-83 (LVIF…GLAL), 114-134 (LIGI…GQSY), 176-196 (FVGV…FGGI), 211-231 (IQLI…YWFD), 260-280 (KLIL…AIFL), and 288-308 (IGVV…PLVV). Residues 896 to 940 (PGADATATGPAATEPPAGQAPQTQGNNTAPPAAQPPNRQGQAPAG) show a composition bias toward low complexity. A disordered region spans residues 896–960 (PGADATATGP…TGPTQLSAAK (65 aa)).

The protein belongs to the UPF0182 family.

It localises to the cell membrane. The polypeptide is UPF0182 protein Mflv_4654 (Mycolicibacterium gilvum (strain PYR-GCK) (Mycobacterium gilvum (strain PYR-GCK))).